A 428-amino-acid polypeptide reads, in one-letter code: Aspartate--tRNA(Asp) ligase (428 aa).

Glu-166 lines the L-aspartate pocket. The aspartate stretch occupies residues 188–191 (QLYK). Arg-210 serves as a coordination point for L-aspartate. Residues 210–212 (RAE), 218–220 (RHL), and Glu-351 contribute to the ATP site. The Mg(2+) site is built by Glu-351 and Ser-354. The L-aspartate site is built by Ser-354 and Arg-358. Residue 399-402 (GLER) coordinates ATP.

It belongs to the class-II aminoacyl-tRNA synthetase family. Type 2 subfamily. As to quaternary structure, homodimer. The cofactor is Mg(2+).

The protein resides in the cytoplasm. The catalysed reaction is tRNA(Asp) + L-aspartate + ATP = L-aspartyl-tRNA(Asp) + AMP + diphosphate. Its function is as follows. Catalyzes the attachment of L-aspartate to tRNA(Asp) in a two-step reaction: L-aspartate is first activated by ATP to form Asp-AMP and then transferred to the acceptor end of tRNA(Asp). This Thermoplasma volcanium (strain ATCC 51530 / DSM 4299 / JCM 9571 / NBRC 15438 / GSS1) protein is Aspartate--tRNA(Asp) ligase.